A 953-amino-acid polypeptide reads, in one-letter code: Dual serine/threonine and tyrosine protein kinase (953 aa).

In terms of domain architecture, Protein kinase spans 665–926 (PKLEREIGRG…VQSKLQDIYT (262 aa)). Residues 671-679 (IGRGQYGVV) and lysine 694 each bind ATP. Aspartate 791 (proton acceptor) is an active-site residue. The segment at 932 to 953 (REAEGGGGGGAKEQQNLKSDTL) is disordered.

Belongs to the protein kinase superfamily. Ser/Thr protein kinase family.

It is found in the cytoplasm. The protein resides in the cell membrane. Its subcellular location is the apical cell membrane. It localises to the basolateral cell membrane. The protein localises to the cell junction. The enzyme catalyses L-seryl-[protein] + ATP = O-phospho-L-seryl-[protein] + ADP + H(+). It carries out the reaction L-threonyl-[protein] + ATP = O-phospho-L-threonyl-[protein] + ADP + H(+). It catalyses the reaction L-tyrosyl-[protein] + ATP = O-phospho-L-tyrosyl-[protein] + ADP + H(+). In terms of biological role, may act as a positive regulator of ERK phosphorylation downstream of fibroblast growth factor-receptor activation. May induce both caspase-dependent apoptosis and caspase-independent cell death. May play a role in the embryonic development. This Strongylocentrotus purpuratus (Purple sea urchin) protein is Dual serine/threonine and tyrosine protein kinase.